A 370-amino-acid chain; its full sequence is Spermidine/putrescine import ATP-binding protein PotA 1 (370 aa).

An ABC transporter domain is found at 12 to 250 (VSIRAVRKVY…PGNRFVADFI (239 aa)). 48–55 (GPSGCGKT) serves as a coordination point for ATP.

The protein belongs to the ABC transporter superfamily. Spermidine/putrescine importer (TC 3.A.1.11.1) family. In terms of assembly, the complex is composed of two ATP-binding proteins (PotA), two transmembrane proteins (PotB and PotC) and a solute-binding protein (PotD).

It localises to the cell inner membrane. The enzyme catalyses ATP + H2O + polyamine-[polyamine-binding protein]Side 1 = ADP + phosphate + polyamineSide 2 + [polyamine-binding protein]Side 1.. In terms of biological role, part of the ABC transporter complex PotABCD involved in spermidine/putrescine import. Responsible for energy coupling to the transport system. This chain is Spermidine/putrescine import ATP-binding protein PotA 1, found in Pseudomonas aeruginosa (strain ATCC 15692 / DSM 22644 / CIP 104116 / JCM 14847 / LMG 12228 / 1C / PRS 101 / PAO1).